Consider the following 107-residue polypeptide: Glutaredoxin 4 (107 aa).

Residues 4-106 (IDKIKQQINE…TLLKETATKH (103 aa)) enclose the Glutaredoxin domain. Lysine 21 is a glutathione binding site. A [2Fe-2S] cluster-binding site is contributed by cysteine 29. Glutathione-binding positions include arginine 58, phenylalanine 70, and 83–84 (CD).

This sequence belongs to the glutaredoxin family. Monothiol subfamily. Homodimer.

It localises to the cytoplasm. Functionally, monothiol glutaredoxin involved in the biogenesis of iron-sulfur clusters. The protein is Glutaredoxin 4 (grxD) of Haemophilus ducreyi (strain 35000HP / ATCC 700724).